The sequence spans 109 residues: Translation initiation factor IF-1, chloroplastic (109 aa).

The region spanning 18–93 (KSLNQEKENL…TRGRIIYRLK (76 aa)) is the S1-like domain.

Belongs to the IF-1 family. Component of the 30S ribosomal translation pre-initiation complex which assembles on the 30S ribosome in the order IF-2 and IF-3, IF-1 and N-formylmethionyl-tRNA(fMet); mRNA recruitment can occur at any time during PIC assembly.

Its subcellular location is the plastid. The protein localises to the chloroplast. One of the essential components for the initiation of protein synthesis. Stabilizes the binding of IF-2 and IF-3 on the 30S subunit to which N-formylmethionyl-tRNA(fMet) subsequently binds. Helps modulate mRNA selection, yielding the 30S pre-initiation complex (PIC). Upon addition of the 50S ribosomal subunit IF-1, IF-2 and IF-3 are released leaving the mature 70S translation initiation complex. This chain is Translation initiation factor IF-1, chloroplastic, found in Tupiella akineta (Green alga).